A 236-amino-acid polypeptide reads, in one-letter code: NAD(P)H-hydrate epimerase (236 aa).

A YjeF N-terminal domain is found at Ala-11 to Val-217. Asn-61–Asp-65 is a binding site for (6S)-NADPHX. K(+)-binding residues include Asn-62 and Asp-123. (6S)-NADPHX contacts are provided by residues Gly-127–Glu-133 and Asp-156. A K(+)-binding site is contributed by Ser-159.

It belongs to the NnrE/AIBP family. K(+) is required as a cofactor.

The protein localises to the cytoplasm. It localises to the mitochondrion. The enzyme catalyses (6R)-NADHX = (6S)-NADHX. It catalyses the reaction (6R)-NADPHX = (6S)-NADPHX. Its function is as follows. Catalyzes the epimerization of the S- and R-forms of NAD(P)HX, a damaged form of NAD(P)H that is a result of enzymatic or heat-dependent hydration. This is a prerequisite for the S-specific NAD(P)H-hydrate dehydratase to allow the repair of both epimers of NAD(P)HX. The protein is NAD(P)H-hydrate epimerase of Fusarium vanettenii (strain ATCC MYA-4622 / CBS 123669 / FGSC 9596 / NRRL 45880 / 77-13-4) (Fusarium solani subsp. pisi).